The following is a 228-amino-acid chain: PKHD-type hydroxylase XC_1340 (228 aa).

Positions 78-180 (RIYPPLFNRY…RVASFFWIQS (103 aa)) constitute a Fe2OG dioxygenase domain. Residues H96, D98, and H161 each contribute to the Fe cation site. R171 contacts 2-oxoglutarate.

Fe(2+) is required as a cofactor. L-ascorbate serves as cofactor.

The chain is PKHD-type hydroxylase XC_1340 from Xanthomonas campestris pv. campestris (strain 8004).